We begin with the raw amino-acid sequence, 458 residues long: Putative long chain fatty acid-CoA ligase VraA (458 aa).

Belongs to the ATP-dependent AMP-binding enzyme family.

The sequence is that of Putative long chain fatty acid-CoA ligase VraA (vraA) from Staphylococcus aureus (strain MRSA252).